The primary structure comprises 321 residues: Lipoyl synthase (321 aa).

The [4Fe-4S] cluster site is built by Cys68, Cys73, Cys79, Cys94, Cys98, Cys101, and Ser308. A Radical SAM core domain is found at 80 to 297 (FNHGTATFMI…KVIALELGFT (218 aa)).

It belongs to the radical SAM superfamily. Lipoyl synthase family. The cofactor is [4Fe-4S] cluster.

It is found in the cytoplasm. The catalysed reaction is [[Fe-S] cluster scaffold protein carrying a second [4Fe-4S](2+) cluster] + N(6)-octanoyl-L-lysyl-[protein] + 2 oxidized [2Fe-2S]-[ferredoxin] + 2 S-adenosyl-L-methionine + 4 H(+) = [[Fe-S] cluster scaffold protein] + N(6)-[(R)-dihydrolipoyl]-L-lysyl-[protein] + 4 Fe(3+) + 2 hydrogen sulfide + 2 5'-deoxyadenosine + 2 L-methionine + 2 reduced [2Fe-2S]-[ferredoxin]. It functions in the pathway protein modification; protein lipoylation via endogenous pathway; protein N(6)-(lipoyl)lysine from octanoyl-[acyl-carrier-protein]: step 2/2. Its function is as follows. Catalyzes the radical-mediated insertion of two sulfur atoms into the C-6 and C-8 positions of the octanoyl moiety bound to the lipoyl domains of lipoate-dependent enzymes, thereby converting the octanoylated domains into lipoylated derivatives. This chain is Lipoyl synthase, found in Aliivibrio salmonicida (strain LFI1238) (Vibrio salmonicida (strain LFI1238)).